The following is a 409-amino-acid chain: N-acetylglucosamine-6-phosphate deacetylase (409 aa).

E143 contacts a divalent metal cation. 154-155 (AH) contributes to the substrate binding site. Residues H211 and H232 each contribute to the a divalent metal cation site. Substrate contacts are provided by residues 235–236 (NA), R243, and 269–272 (DGIH). D294 acts as the Proton donor/acceptor in catalysis. 328–330 (LSG) serves as a coordination point for substrate.

The protein belongs to the metallo-dependent hydrolases superfamily. NagA family. The cofactor is a divalent metal cation.

It carries out the reaction N-acetyl-D-glucosamine 6-phosphate + H2O = D-glucosamine 6-phosphate + acetate. The protein operates within amino-sugar metabolism; N-acetylneuraminate degradation. In terms of biological role, hydrolyzes the N-glycolyl group from N-glycolylglucosamine 6-phosphate (GlcNGc-6-P) in the N-glycolylneuraminic acid (Neu5Gc) degradation pathway. The polypeptide is N-acetylglucosamine-6-phosphate deacetylase (AMDHD2) (Bos taurus (Bovine)).